Reading from the N-terminus, the 258-residue chain is uncharacterized protein (258 aa).

Helical transmembrane passes span 14-34 (LAFP…LAAI), 53-73 (VIIW…YFFV), 110-130 (AALC…WLAL), 185-205 (GLAL…GIIF), and 238-258 (GINT…AQLI).

Belongs to the TMEM19 family.

The protein localises to the cell membrane. This is an uncharacterized protein from Synechocystis sp. (strain ATCC 27184 / PCC 6803 / Kazusa).